Reading from the N-terminus, the 284-residue chain is MTEKPEIWTIRKVLDWTRGYLAEKGVENARLETEWLLSAALGLDRVGLYVNFDKPLNPEELAACRGLVARRAKREPLQYILGTQEFCGLDFVVTPSVLIPRHDTEVIVEEALRRAPHAAAVLDIGVGSGCIAVALAKQLPHAQVVGVEQSPGAIALAQRNAERHGARVTLFEGSLFEPLGDQRFDLIVSNPPYIPTADLEALQPEVREYEPRAALDGGSDGLDFYRLIVPAAPEYLNPGGWLMVELGIGQAETVLGMFSRTGFCDCFTAQDPNGIDRVVGGRIG.

Residues 125 to 129, Glu-148, and Asn-190 contribute to the S-adenosyl-L-methionine site; that span reads GVGSG. 190–193 serves as a coordination point for substrate; that stretch reads NPPY.

This sequence belongs to the protein N5-glutamine methyltransferase family. PrmC subfamily.

It catalyses the reaction L-glutaminyl-[peptide chain release factor] + S-adenosyl-L-methionine = N(5)-methyl-L-glutaminyl-[peptide chain release factor] + S-adenosyl-L-homocysteine + H(+). Its function is as follows. Methylates the class 1 translation termination release factors RF1/PrfA and RF2/PrfB on the glutamine residue of the universally conserved GGQ motif. This Geobacter sulfurreducens (strain ATCC 51573 / DSM 12127 / PCA) protein is Release factor glutamine methyltransferase.